A 242-amino-acid chain; its full sequence is Lactate utilization protein A 1 (242 aa).

The protein belongs to the LutA/YkgE family.

Functionally, is involved in L-lactate degradation and allows cells to grow with lactate as the sole carbon source. The protein is Lactate utilization protein A 1 of Bacillus anthracis (strain CDC 684 / NRRL 3495).